Reading from the N-terminus, the 200-residue chain is FMN-dependent NADH:quinone oxidoreductase (200 aa).

FMN contacts are provided by residues S10 and M95–F98.

This sequence belongs to the azoreductase type 1 family. As to quaternary structure, homodimer. Requires FMN as cofactor.

The catalysed reaction is 2 a quinone + NADH + H(+) = 2 a 1,4-benzosemiquinone + NAD(+). It catalyses the reaction N,N-dimethyl-1,4-phenylenediamine + anthranilate + 2 NAD(+) = 2-(4-dimethylaminophenyl)diazenylbenzoate + 2 NADH + 2 H(+). Quinone reductase that provides resistance to thiol-specific stress caused by electrophilic quinones. In terms of biological role, also exhibits azoreductase activity. Catalyzes the reductive cleavage of the azo bond in aromatic azo compounds to the corresponding amines. The polypeptide is FMN-dependent NADH:quinone oxidoreductase (Alteromonas mediterranea (strain DSM 17117 / CIP 110805 / LMG 28347 / Deep ecotype)).